A 166-amino-acid chain; its full sequence is Phosphopantetheine adenylyltransferase (166 aa).

A substrate-binding site is contributed by serine 9. ATP contacts are provided by residues 9 to 10 (SF) and histidine 17. Substrate contacts are provided by lysine 41, threonine 74, and arginine 88. Residues 89–91 (GLR), glutamate 99, and 124–130 (DSFISSS) each bind ATP.

This sequence belongs to the bacterial CoaD family. Homohexamer. Mg(2+) is required as a cofactor.

The protein localises to the cytoplasm. It carries out the reaction (R)-4'-phosphopantetheine + ATP + H(+) = 3'-dephospho-CoA + diphosphate. It participates in cofactor biosynthesis; coenzyme A biosynthesis; CoA from (R)-pantothenate: step 4/5. Functionally, reversibly transfers an adenylyl group from ATP to 4'-phosphopantetheine, yielding dephospho-CoA (dPCoA) and pyrophosphate. The protein is Phosphopantetheine adenylyltransferase of Lactobacillus johnsonii (strain CNCM I-12250 / La1 / NCC 533).